The chain runs to 554 residues: Laccase-8 (554 aa).

Positions 1–21 (MASAAMLVPLVLVLCTAAASA) are cleaved as a signal peptide. Plastocyanin-like domains follow at residues 29 to 145 (KVGG…PRNG) and 156 to 309 (EEIP…YKGV). Residues His79 and His81 each contribute to the Cu cation site. 2 N-linked (GlcNAc...) asparagine glycosylation sites follow: Asn107 and Asn113. The Cu cation site is built by His124 and His126. 2 N-linked (GlcNAc...) asparagine glycosylation sites follow: Asn271 and Asn369. The Plastocyanin-like 3 domain maps to 411–537 (DFPDFPPPMQ…AMVFEVLNGP (127 aa)). The Cu cation site is built by His455, His458, His460, His516, Cys517, His518, and His522.

Belongs to the multicopper oxidase family. Cu cation is required as a cofactor.

The protein localises to the secreted. Its subcellular location is the extracellular space. It localises to the apoplast. The enzyme catalyses 4 hydroquinone + O2 = 4 benzosemiquinone + 2 H2O. Functionally, lignin degradation and detoxification of lignin-derived products. This is Laccase-8 (LAC8) from Oryza sativa subsp. japonica (Rice).